A 32-amino-acid polypeptide reads, in one-letter code: U6-ctenitoxin-Pr1a (32 aa).

3 disulfide bridges follow: cysteine 3–cysteine 17, cysteine 10–cysteine 21, and cysteine 16–cysteine 30.

In terms of tissue distribution, expressed by the venom gland.

It localises to the secreted. The chain is U6-ctenitoxin-Pr1a from Phoneutria reidyi (Brazilian Amazonian armed spider).